The primary structure comprises 178 residues: Non-specific lipid transfer protein-like 1 (178 aa).

Residues 1 to 26 (MAVAARAAAVACLLVVGLAAVAGVDG) form the signal peptide. 2 disulfides stabilise this stretch: Cys-50–Cys-68 and Cys-69–Cys-110. A glycan (N-linked (GlcNAc...) asparagine) is linked at Asn-99. The GPI-anchor amidated alanine moiety is linked to residue Ala-149. Positions 150 to 178 (AARSPMASTTAVLVVAAAVAAPLLAFFHF) are cleaved as a propeptide — removed in mature form.

Belongs to the plant LTP family. In terms of processing, O-glycosylated on hydroxyprolines; noncontiguous hydroxylproline residues are glycosylated with arabinogalactan. Expressed in roots, stems, leaves, flowers and seeds.

The protein resides in the vacuole. It is found in the aleurone grain membrane. This Oryza sativa subsp. japonica (Rice) protein is Non-specific lipid transfer protein-like 1 (LTPL1).